The primary structure comprises 631 residues: PTS system beta-glucoside-specific EIIBCA component (631 aa).

The PTS EIIB type-1 domain occupies 1 to 86 (MNYETLASEI…LSLDGMARFS (86 aa)). Catalysis depends on Cys-26, which acts as the Phosphocysteine intermediate; for EIIB activity. In terms of domain architecture, PTS EIIC type-1 spans 105–466 (DIISSIFTPF…DETQPAAADS (362 aa)). 10 helical membrane-spanning segments follow: residues 120 to 140 (ATGI…ISES), 146 to 166 (LLFA…GYTA), 175 to 195 (FTTL…AFNA), 206 to 226 (FLGI…ILFA), 248 to 268 (FFTP…LIGP), 295 to 315 (VMGA…FVPL), 328 to 348 (LLPL…GVLL), 358 to 378 (IAGS…VYGV), 385 to 405 (PFIF…YAHT), and 434 to 454 (AVIG…SFGV). Residues 501-605 (DRTFASGVMG…DLTTPIVITN (105 aa)) form the PTS EIIA type-1 domain. Catalysis depends on His-553, which acts as the Tele-phosphohistidine intermediate; for EIIA activity.

The protein resides in the cell inner membrane. The phosphoenolpyruvate-dependent sugar phosphotransferase system (sugar PTS), a major carbohydrate active -transport system, catalyzes the phosphorylation of incoming sugar substrates concomitantly with their translocation across the cell membrane. This system is involved in beta-glucoside transport. Functionally, acts both as a kinase and as a phosphatase on ArbG. The polypeptide is PTS system beta-glucoside-specific EIIBCA component (arbF) (Dickeya chrysanthemi (Pectobacterium chrysanthemi)).